The primary structure comprises 395 residues: Phosphoglycerate kinase (395 aa).

Residues 20–22 (DFN), R36, 59–62 (HLGR), R120, and R157 each bind substrate. ATP is bound by residues K208, G296, E327, and 353-356 (GGDT).

Belongs to the phosphoglycerate kinase family. Monomer.

It is found in the cytoplasm. It carries out the reaction (2R)-3-phosphoglycerate + ATP = (2R)-3-phospho-glyceroyl phosphate + ADP. The protein operates within carbohydrate degradation; glycolysis; pyruvate from D-glyceraldehyde 3-phosphate: step 2/5. The sequence is that of Phosphoglycerate kinase from Tropheryma whipplei (strain Twist) (Whipple's bacillus).